The primary structure comprises 1025 residues: Presequence protease, mitochondrial (1025 aa).

Histidine 90 is a Zn(2+) binding site. The active-site Proton acceptor is glutamate 93. A Zn(2+)-binding site is contributed by histidine 94. Residue glutamate 166 is part of the active site. Glutamate 197 is a Zn(2+) binding site.

Belongs to the peptidase M16 family. PreP subfamily. As to quaternary structure, monomer and homodimer; homodimerization is induced by binding of the substrate. It depends on Zn(2+) as a cofactor.

The protein localises to the mitochondrion intermembrane space. The protein resides in the mitochondrion matrix. Functionally, degrades mitochondrial transit peptides after their cleavage in the intermembrane space or in the matrix, and presequence peptides; clearance of these peptides is required to keep the presequence processing machinery running. Preferentially cleaves the N-terminal side of paired basic amino acid residues. Also degrades other unstructured peptides. May function as an ATP-dependent peptidase as opposed to a metalloendopeptidase. This Aspergillus oryzae (strain ATCC 42149 / RIB 40) (Yellow koji mold) protein is Presequence protease, mitochondrial (cym1).